The chain runs to 87 residues: MVNMKASMFLTFAGLVLLFVVCYASESEEKEFPKEMLSSIFAVDNDFKQEERDCAGYMRECEEKLCCSGYVCSSRWKWCVLPAPWRR.

Positions 1 to 24 (MVNMKASMFLTFAGLVLLFVVCYA) are cleaved as a signal peptide. Residues 25–52 (SESEEKEFPKEMLSSIFAVDNDFKQEER) constitute a propeptide that is removed on maturation. Intrachain disulfides connect Cys54/Cys67, Cys61/Cys72, and Cys66/Cys79.

This sequence belongs to the neurotoxin 10 (Hwtx-1) family. 51 (Hntx-8) subfamily. Hntx-8 sub-subfamily. Expressed by the venom gland.

The protein resides in the secreted. Functionally, ion channel inhibitor. The sequence is that of U3-theraphotoxin-Hhn1q from Cyriopagopus hainanus (Chinese bird spider).